Consider the following 769-residue polypeptide: MKNLIKKFTIAVIVLSILYISYTTYISMNGIIIGTKIHKNDKSQFMIEEISESSYGQFVGLRQGDIILKINKEKPSDKHLKWGYLSHINSLDILRSGKKIHLKDFDLVTLNRPYSFFLFVLPLFFYFLSIICIFYILKVNKKRRSFAAYILILLLLDISIAYISAGGPFRGHIINRYINLFTFISSPILYLQFIQRYLGEIGKTFLNRISFLYIIPIFNLGIEFFQDYLQVDIDFLATLNLVSFATLTLFSFSAIYLHLNKYKYAEHSFILKLLILTNTLSFAPFLIFFVLPIIFTGNYIFPALASASLLVLIPFGLVYQFVANKMFDIEFILGRMRYYALLAMIPTLLIVGALVLFDVMDIQMNPVRQTVFFFVVMFAVFYFKEVMDFKFRLKRFSEKFNYQDSIFKYTQLMRGVTSLQQVFKELKNTILDVLLVSKAYTFEVTPDHKVIFLDKHEVGPDWNFYQEEFENVTSEIGKIIEVNQGFLMKVGERGGSSYVLLCLSNINTPRLTRDEISWLKTLSFYTSVSMENVLHIEELMEHLKDLKQEGTNPIWLKKLMFAIEEKQRSGLARDLHDSVLQDLISLKRQCELFLGDFKKDDNPCREEVQDKLVQMNEQMSDVISMTRETCHELRPQLLYDLGLVKALSKLVAQQQERVPFHIRLNTGRFTASLDLDSQLNLYRIIQEFLSNAVKHSQATDVLIMLISIQNKIVLHYEDDGVGFDQEKNTEHSMSMGLSGIKERVRALDGRLRIETSEGKGFKADIEIEL.

The Cytoplasmic portion of the chain corresponds to 1–9 (MKNLIKKFT). A helical membrane pass occupies residues 10 to 33 (IAVIVLSILYISYTTYISMNGIII). Topologically, residues 34–113 (GTKIHKNDKS…DFDLVTLNRP (80 aa)) are extracellular. The chain crosses the membrane as a helical span at residues 114-134 (YSFFLFVLPLFFYFLSIICIF). At 135-144 (YILKVNKKRR) the chain is on the cytoplasmic side. The helical transmembrane segment at 145–167 (SFAAYILILLLLDISIAYISAGG) threads the bilayer. Residues 168–235 (PFRGHIINRY…QDYLQVDIDF (68 aa)) are Extracellular-facing. Residues 236 to 257 (LATLNLVSFATLTLFSFSAIYL) traverse the membrane as a helical segment. Topologically, residues 258 to 272 (HLNKYKYAEHSFILK) are cytoplasmic. Residues 273-295 (LLILTNTLSFAPFLIFFVLPIIF) form a helical membrane-spanning segment. At 296–299 (TGNY) the chain is on the extracellular side. The chain crosses the membrane as a helical span at residues 300 to 323 (IFPALASASLLVLIPFGLVYQFVA). Topologically, residues 324–337 (NKMFDIEFILGRMR) are cytoplasmic. The chain crosses the membrane as a helical span at residues 338-357 (YYALLAMIPTLLIVGALVLF). The Extracellular portion of the chain corresponds to 358 to 361 (DVMD). Residues 362-383 (IQMNPVRQTVFFFVVMFAVFYF) traverse the membrane as a helical segment. Over 384 to 769 (KEVMDFKFRL…GFKADIEIEL (386 aa)) the chain is Cytoplasmic. A Histidine kinase domain is found at 571 to 769 (LARDLHDSVL…GFKADIEIEL (199 aa)). The residue at position 576 (H576) is a Phosphohistidine; by autocatalysis.

Autophosphorylates on a histidine and transfers the phosphate group onto an aspartate in ComA, thus activating it.

It is found in the cell membrane. The enzyme catalyses ATP + protein L-histidine = ADP + protein N-phospho-L-histidine.. In terms of biological role, sensor in the two-component regulatory system ComP/ComA involved in a major quorum response pathway that regulates the development of genetic competence. Plays a role in sporulation, at least partly interchangeable with that of SpoIIJ. Probably activates ComA by phosphorylation. The chain is Sensor histidine kinase ComP (comP) from Bacillus subtilis (strain 168).